The following is a 325-amino-acid chain: Cytochrome c biogenesis protein CcsA (325 aa).

The next 8 membrane-spanning stretches (helical) occupy residues 12–32, 45–65, 72–92, 100–120, 145–165, 231–251, 264–281, and 293–313; these read HISF…LLFV, GMII…VFSG, LYES…VPYF, LNTI…SGLL, MILG…ILVI, TISL…VWAN, ETWA…LHTR, and IVAS…NLLG.

Belongs to the CcmF/CycK/Ccl1/NrfE/CcsA family. May interact with Ccs1.

Its subcellular location is the plastid. It is found in the chloroplast thylakoid membrane. Required during biogenesis of c-type cytochromes (cytochrome c6 and cytochrome f) at the step of heme attachment. The sequence is that of Cytochrome c biogenesis protein CcsA from Glycine max (Soybean).